Here is a 359-residue protein sequence, read N- to C-terminus: UPF0283 membrane protein RL2646 (359 aa).

The interval 1-48 (MSKPPSDPPRRAPAAFIYEDEATERRDNGRQGGERRKPESFSEHIVVT) is disordered. Positions 23 to 42 (TERRDNGRQGGERRKPESFS) are enriched in basic and acidic residues. 2 helical membrane-spanning segments follow: residues 77-97 (FGKI…GLWT) and 111-131 (LGYA…ALVI).

Belongs to the UPF0283 family.

Its subcellular location is the cell inner membrane. This Rhizobium johnstonii (strain DSM 114642 / LMG 32736 / 3841) (Rhizobium leguminosarum bv. viciae) protein is UPF0283 membrane protein RL2646.